The following is a 153-amino-acid chain: SsrA-binding protein (153 aa).

The protein belongs to the SmpB family.

The protein resides in the cytoplasm. Its function is as follows. Required for rescue of stalled ribosomes mediated by trans-translation. Binds to transfer-messenger RNA (tmRNA), required for stable association of tmRNA with ribosomes. tmRNA and SmpB together mimic tRNA shape, replacing the anticodon stem-loop with SmpB. tmRNA is encoded by the ssrA gene; the 2 termini fold to resemble tRNA(Ala) and it encodes a 'tag peptide', a short internal open reading frame. During trans-translation Ala-aminoacylated tmRNA acts like a tRNA, entering the A-site of stalled ribosomes, displacing the stalled mRNA. The ribosome then switches to translate the ORF on the tmRNA; the nascent peptide is terminated with the 'tag peptide' encoded by the tmRNA and targeted for degradation. The ribosome is freed to recommence translation, which seems to be the essential function of trans-translation. The protein is SsrA-binding protein of Pelotomaculum thermopropionicum (strain DSM 13744 / JCM 10971 / SI).